A 546-amino-acid polypeptide reads, in one-letter code: Chaperonin GroEL (546 aa).

Residues 29 to 32 (TLGP), lysine 50, 86 to 90 (DGTTT), glycine 414, 477 to 479 (NAL), and aspartate 493 each bind ATP.

The protein belongs to the chaperonin (HSP60) family. As to quaternary structure, forms a cylinder of 14 subunits composed of two heptameric rings stacked back-to-back. Interacts with the co-chaperonin GroES.

Its subcellular location is the cytoplasm. It carries out the reaction ATP + H2O + a folded polypeptide = ADP + phosphate + an unfolded polypeptide.. Functionally, together with its co-chaperonin GroES, plays an essential role in assisting protein folding. The GroEL-GroES system forms a nano-cage that allows encapsulation of the non-native substrate proteins and provides a physical environment optimized to promote and accelerate protein folding. This chain is Chaperonin GroEL, found in Leptospira interrogans serogroup Icterohaemorrhagiae serovar copenhageni (strain Fiocruz L1-130).